Reading from the N-terminus, the 151-residue chain is Acidic phospholipase A2 6 (151 aa).

A signal peptide spans 1 to 27; sequence MYPAHLLVLLAVCVSLLGAASIPARPL. Disulfide bonds link C38–C104, C54–C151, C56–C72, C71–C132, C78–C125, C88–C118, and C111–C123. 3 residues coordinate Ca(2+): Y55, G57, and G59. Residue H75 is part of the active site. D76 serves as a coordination point for Ca(2+). Residue D126 is part of the active site.

The protein belongs to the phospholipase A2 family. Group I subfamily. D49 sub-subfamily. The cofactor is Ca(2+). As to expression, expressed by the venom gland.

The protein resides in the secreted. The enzyme catalyses a 1,2-diacyl-sn-glycero-3-phosphocholine + H2O = a 1-acyl-sn-glycero-3-phosphocholine + a fatty acid + H(+). In terms of biological role, PLA2 catalyzes the calcium-dependent hydrolysis of the 2-acyl groups in 3-sn-phosphoglycerides. The sequence is that of Acidic phospholipase A2 6 from Tropidechis carinatus (Australian rough-scaled snake).